The following is a 204-amino-acid chain: Protein phosphatase 1 regulatory subunit 1B (204 aa).

The residue at position 1 (M1) is an N-acetylmethionine. Residues 1-204 (MDPKDRKKIQ…QRPSPSEPGT (204 aa)) form a disordered region. T34 carries the post-translational modification Phosphothreonine; by PKA. Over residues 41–63 (LSEHSSPEEEASPHQRASGEGHH) the composition is skewed to basic and acidic residues. Phosphoserine is present on residues S45 and S46. Phosphothreonine; by CDK5 is present on T75. Over residues 89 to 100 (HLQSISNLNENQ) the composition is skewed to polar residues. S102 is subject to Phosphoserine. The span at 109–118 (GELRELGYPR) shows a compositional bias: basic and acidic residues. 2 stretches are compositionally biased toward acidic residues: residues 119–138 (EEDE…EDSQ) and 170–183 (DESE…DQVE). Residue S137 is modified to Phosphoserine. The residue at position 198 (S198) is a Phosphoserine.

Belongs to the protein phosphatase inhibitor 1 family. In terms of processing, dopamine- and cyclic AMP-regulated neuronal phosphoprotein. Phosphorylation of Thr-34 is required for activity.

Its subcellular location is the cytoplasm. Functionally, inhibitor of protein-phosphatase 1. In Homo sapiens (Human), this protein is Protein phosphatase 1 regulatory subunit 1B (PPP1R1B).